We begin with the raw amino-acid sequence, 233 residues long: NAD-dependent protein deacylase (233 aa).

One can recognise a Deacetylase sirtuin-type domain in the interval 1 to 230; the sequence is MKNIMILSGA…ALDIENFMKD (230 aa). 9–28 provides a ligand contact to NAD(+); the sequence is GAGLSAPSGLKTFRDNDGLW. Y53 and R56 together coordinate substrate. An NAD(+)-binding site is contributed by 88-91; it reads QNVD. H106 acts as the Proton acceptor in catalysis. Zn(2+) is bound by residues C114, C117, C133, and C136. NAD(+)-binding positions include 172-174 and 200-202; these read GTS and NLE.

It belongs to the sirtuin family. Class III subfamily. It depends on Zn(2+) as a cofactor.

It localises to the cytoplasm. It catalyses the reaction N(6)-acetyl-L-lysyl-[protein] + NAD(+) + H2O = 2''-O-acetyl-ADP-D-ribose + nicotinamide + L-lysyl-[protein]. It carries out the reaction N(6)-succinyl-L-lysyl-[protein] + NAD(+) + H2O = 2''-O-succinyl-ADP-D-ribose + nicotinamide + L-lysyl-[protein]. Its function is as follows. NAD-dependent lysine deacetylase and desuccinylase that specifically removes acetyl and succinyl groups on target proteins. Modulates the activities of several proteins which are inactive in their acylated form. The protein is NAD-dependent protein deacylase of Campylobacter jejuni subsp. jejuni serotype O:2 (strain ATCC 700819 / NCTC 11168).